A 527-amino-acid chain; its full sequence is UDP-glucuronosyltransferase 2A3 (527 aa).

The signal sequence occupies residues 1-23; sequence MRSDKSALVFLLLQLFCVGCGFC. Topologically, residues 24-491 are extracellular; the sequence is GKVLVWPCDM…TWFQHYSIDV (468 aa). Asn313 carries N-linked (GlcNAc...) asparagine glycosylation. Residues 492–512 form a helical membrane-spanning segment; sequence IGFLLACVATAIFLFTKCFLF. The Cytoplasmic portion of the chain corresponds to 513–527; that stretch reads SCQKFNKTRKIEKRE.

Belongs to the UDP-glycosyltransferase family.

The protein localises to the membrane. The catalysed reaction is glucuronate acceptor + UDP-alpha-D-glucuronate = acceptor beta-D-glucuronoside + UDP + H(+). Functionally, UDP-glucuronosyltransferases catalyze phase II biotransformation reactions in which lipophilic substrates are conjugated with glucuronic acid to increase water solubility and enhance excretion. They are of major importance in the conjugation and subsequent elimination of potentially toxic xenobiotics and endogenous compounds. The chain is UDP-glucuronosyltransferase 2A3 (UGT2A3) from Homo sapiens (Human).